The following is a 156-amino-acid chain: Transcriptional repressor NrdR (156 aa).

A zinc finger lies at 3–34 (CPKCNSTQSKVVDSRHADELNAIRRRRECENC). The ATP-cone domain occupies 49–139 (LIVVKKDGTR…VYKEFKDVDQ (91 aa)).

Belongs to the NrdR family. Zn(2+) is required as a cofactor.

In terms of biological role, negatively regulates transcription of bacterial ribonucleotide reductase nrd genes and operons by binding to NrdR-boxes. The polypeptide is Transcriptional repressor NrdR (Staphylococcus aureus (strain NCTC 8325 / PS 47)).